The chain runs to 125 residues: UPF0251 protein DSY3441 (125 aa).

Belongs to the UPF0251 family.

In Desulfitobacterium hafniense (strain Y51), this protein is UPF0251 protein DSY3441.